A 208-amino-acid polypeptide reads, in one-letter code: Outer-membrane lipoprotein carrier protein (208 aa).

The first 25 residues, 1-25 (MKKRFSAKLFSALVLSISFFSAANA), serve as a signal peptide directing secretion.

This sequence belongs to the LolA family. Monomer.

The protein localises to the periplasm. Functionally, participates in the translocation of lipoproteins from the inner membrane to the outer membrane. Only forms a complex with a lipoprotein if the residue after the N-terminal Cys is not an aspartate (The Asp acts as a targeting signal to indicate that the lipoprotein should stay in the inner membrane). This is Outer-membrane lipoprotein carrier protein from Vibrio parahaemolyticus serotype O3:K6 (strain RIMD 2210633).